Consider the following 723-residue polypeptide: ATP-dependent DNA helicase RRM3 (723 aa).

2 disordered regions span residues 1 to 31 (MFRS…SGSH) and 61 to 101 (DLES…DDDP). Ser-64 bears the Phosphoserine mark. The segment covering 83 to 96 (NNSSSLFSQSQGSF) has biased composition (low complexity). ATP is bound at residue 254–261 (GSAGTGKS). The DNA-binding element occupies 682–701 (QVYVALSRAVTMDTLQVLNF).

The protein belongs to the helicase family. As to quaternary structure, interacts with DEF1 and POL30.

The protein localises to the nucleus. It localises to the chromosome. It is found in the telomere. It catalyses the reaction Couples ATP hydrolysis with the unwinding of duplex DNA at the replication fork by translocating in the 5'-3' direction. This creates two antiparallel DNA single strands (ssDNA). The leading ssDNA polymer is the template for DNA polymerase III holoenzyme which synthesizes a continuous strand.. The enzyme catalyses ATP + H2O = ADP + phosphate + H(+). 5' to 3' DNA replicative helicase recruited to paused replisomes to promote fork progression throughout nonhistone protein-DNA complexes, naturally occurring impediments that are encountered in each S phase where replication forks pauses. Needed for normal fork progression through over 1000 discrete sites scattered throughout the genome, like rDNA, tRNA genes, centromeres, active replication origins, or transcriptional silencers. Required for timely replication of the telomere and subtelomeric DNA and for wild-type levels of telomeric silencing. Involved in regulation of Ty1 transposition and protects the genome from instability at nascent sites of retrotransposition. Involved in DNA repair during stalled replication fork, regulation of fragile sites expression and essential for genome stability. Also plays a role in mtDNA replication. Has G-quadruplex (G4) unwinding activity and can suppress G4-induced genome instability when PIF1 levels are low. The sequence is that of ATP-dependent DNA helicase RRM3 from Saccharomyces cerevisiae (strain ATCC 204508 / S288c) (Baker's yeast).